A 371-amino-acid polypeptide reads, in one-letter code: Aminomethyltransferase (371 aa).

It belongs to the GcvT family. The glycine cleavage system is composed of four proteins: P, T, L and H.

The catalysed reaction is N(6)-[(R)-S(8)-aminomethyldihydrolipoyl]-L-lysyl-[protein] + (6S)-5,6,7,8-tetrahydrofolate = N(6)-[(R)-dihydrolipoyl]-L-lysyl-[protein] + (6R)-5,10-methylene-5,6,7,8-tetrahydrofolate + NH4(+). In terms of biological role, the glycine cleavage system catalyzes the degradation of glycine. This is Aminomethyltransferase from Cutibacterium acnes (strain DSM 16379 / KPA171202) (Propionibacterium acnes).